Consider the following 224-residue polypeptide: Thiamine-phosphate synthase (224 aa).

4-amino-2-methyl-5-(diphosphooxymethyl)pyrimidine contacts are provided by residues 43-47 (QYRPK) and Asn75. 2 residues coordinate Mg(2+): Asp76 and Asp95. Position 114 (Ser114) interacts with 4-amino-2-methyl-5-(diphosphooxymethyl)pyrimidine. 141–143 (SAT) contacts 2-[(2R,5Z)-2-carboxy-4-methylthiazol-5(2H)-ylidene]ethyl phosphate. 4-amino-2-methyl-5-(diphosphooxymethyl)pyrimidine is bound at residue Lys144. 2-[(2R,5Z)-2-carboxy-4-methylthiazol-5(2H)-ylidene]ethyl phosphate is bound at residue Gly171.

The protein belongs to the thiamine-phosphate synthase family. Mg(2+) serves as cofactor.

The enzyme catalyses 2-[(2R,5Z)-2-carboxy-4-methylthiazol-5(2H)-ylidene]ethyl phosphate + 4-amino-2-methyl-5-(diphosphooxymethyl)pyrimidine + 2 H(+) = thiamine phosphate + CO2 + diphosphate. It carries out the reaction 2-(2-carboxy-4-methylthiazol-5-yl)ethyl phosphate + 4-amino-2-methyl-5-(diphosphooxymethyl)pyrimidine + 2 H(+) = thiamine phosphate + CO2 + diphosphate. The catalysed reaction is 4-methyl-5-(2-phosphooxyethyl)-thiazole + 4-amino-2-methyl-5-(diphosphooxymethyl)pyrimidine + H(+) = thiamine phosphate + diphosphate. It participates in cofactor biosynthesis; thiamine diphosphate biosynthesis; thiamine phosphate from 4-amino-2-methyl-5-diphosphomethylpyrimidine and 4-methyl-5-(2-phosphoethyl)-thiazole: step 1/1. Condenses 4-methyl-5-(beta-hydroxyethyl)thiazole monophosphate (THZ-P) and 2-methyl-4-amino-5-hydroxymethyl pyrimidine pyrophosphate (HMP-PP) to form thiamine monophosphate (TMP). The protein is Thiamine-phosphate synthase of Methylococcus capsulatus (strain ATCC 33009 / NCIMB 11132 / Bath).